A 363-amino-acid polypeptide reads, in one-letter code: MKIVVSGGGTGGHIYPALAFINEMKKRDERLDVLYIGTERGLESEIVPREGIPFQTIHITGFQRKLSMENVKTVVRFLRGTKRAKALLNEFKPDVVIGTGGYVCGPVVYAAAKLKIPTVIHEQNSVPGLTNKFLSRYVDRIAICFKEAEAFFPKNKVVFTGNPRASEVMSGNREEGLRSLGIKPNKKTVLIVGGSRGARPINDAFMSILSDVKAKPYQFVYVTGTVHYERVQEQMKSIGQPENVIVQPFIHNMPDVLSAVDLIVARAGATTLAEITALGLPSILIPSPYVTNNHQEKNAAALSKKDAAILRKESELTGDRLLEDIDDIMVTPGRLDAMKQAAKALGVPTAAEKLHMLVKEVAK.

Residues 10–12 (TGG), N124, S195, I250, and Q295 contribute to the UDP-N-acetyl-alpha-D-glucosamine site.

The protein belongs to the glycosyltransferase 28 family. MurG subfamily.

The protein localises to the cell membrane. It catalyses the reaction di-trans,octa-cis-undecaprenyl diphospho-N-acetyl-alpha-D-muramoyl-L-alanyl-D-glutamyl-meso-2,6-diaminopimeloyl-D-alanyl-D-alanine + UDP-N-acetyl-alpha-D-glucosamine = di-trans,octa-cis-undecaprenyl diphospho-[N-acetyl-alpha-D-glucosaminyl-(1-&gt;4)]-N-acetyl-alpha-D-muramoyl-L-alanyl-D-glutamyl-meso-2,6-diaminopimeloyl-D-alanyl-D-alanine + UDP + H(+). It participates in cell wall biogenesis; peptidoglycan biosynthesis. Its function is as follows. Cell wall formation. Catalyzes the transfer of a GlcNAc subunit on undecaprenyl-pyrophosphoryl-MurNAc-pentapeptide (lipid intermediate I) to form undecaprenyl-pyrophosphoryl-MurNAc-(pentapeptide)GlcNAc (lipid intermediate II). The chain is UDP-N-acetylglucosamine--N-acetylmuramyl-(pentapeptide) pyrophosphoryl-undecaprenol N-acetylglucosamine transferase from Halalkalibacterium halodurans (strain ATCC BAA-125 / DSM 18197 / FERM 7344 / JCM 9153 / C-125) (Bacillus halodurans).